Here is a 359-residue protein sequence, read N- to C-terminus: Nicotinate-nucleotide--dimethylbenzimidazole phosphoribosyltransferase (359 aa).

Glu-318 serves as the catalytic Proton acceptor.

The protein belongs to the CobT family. As to quaternary structure, homodimer.

The catalysed reaction is 5,6-dimethylbenzimidazole + nicotinate beta-D-ribonucleotide = alpha-ribazole 5'-phosphate + nicotinate + H(+). It participates in nucleoside biosynthesis; alpha-ribazole biosynthesis; alpha-ribazole from 5,6-dimethylbenzimidazole: step 1/2. In terms of biological role, catalyzes the synthesis of alpha-ribazole-5'-phosphate from nicotinate mononucleotide (NAMN) and 5,6-dimethylbenzimidazole (DMB). The polypeptide is Nicotinate-nucleotide--dimethylbenzimidazole phosphoribosyltransferase (Shigella sonnei (strain Ss046)).